A 143-amino-acid chain; its full sequence is Actin-depolymerizing factor 5 (143 aa).

In terms of domain architecture, ADF-H spans glycine 11–glutamine 143.

Belongs to the actin-binding proteins ADF family.

Actin-depolymerizing protein. Severs actin filaments (F-actin) and binds to actin monomers. The polypeptide is Actin-depolymerizing factor 5 (ADF5) (Oryza sativa subsp. japonica (Rice)).